Here is a 281-residue protein sequence, read N- to C-terminus: uncharacterized protein (281 aa).

This is an uncharacterized protein from Haloarcula marismortui (strain ATCC 43049 / DSM 3752 / JCM 8966 / VKM B-1809) (Halobacterium marismortui).